A 591-amino-acid chain; its full sequence is Mono(ADP-ribosyl)transferase SpvB (591 aa).

The region spanning 373-576 (PMMGGNSSRP…LRLSDDATAD (204 aa)) is the TR mART core domain. Catalysis depends on residues Arg471, Ser501, and Glu538.

Belongs to the SpvB family.

Its subcellular location is the secreted. It carries out the reaction L-arginyl-[protein] + NAD(+) = N(omega)-(ADP-D-ribosyl)-L-arginyl-[protein] + nicotinamide + H(+). Mono-ADP-ribosylates eukaryotic muscle and non-muscle actin on 'Arg-177'. ADP-ribosylation prevents the polymerization of G-actin to F-actin, causing actin filament depolymerization, destruction of the cytoskeleton and cytotoxicity. Does not possess NAD(+)-glycohydrolase activity, unlike most mART enzymes. In Salmonella enteritidis, this protein is Mono(ADP-ribosyl)transferase SpvB (spvB).